Reading from the N-terminus, the 420-residue chain is Serine palmitoyltransferase (420 aa).

Pyridoxal 5'-phosphate is bound by residues 134–135 (GY), His-234, Thr-262, and Ser-264. Lys-265 bears the N6-(pyridoxal phosphate)lysine mark.

Belongs to the class-II pyridoxal-phosphate-dependent aminotransferase family. Homodimer. The cofactor is pyridoxal 5'-phosphate.

Its subcellular location is the cytoplasm. The enzyme catalyses L-serine + hexadecanoyl-CoA + H(+) = 3-oxosphinganine + CO2 + CoA. Its pathway is lipid metabolism; sphingolipid metabolism. Not inhibited by relatively high concentrations of palmitoyl-CoA. Inhibited by both D-cycloserine (DCS) and L-cycloserine (LCS), which inactivate SPT by transamination to form a free pyridoxamine 5'-phosphate (PMP) and beta-aminooxyacetaldehyde that remain bound at the active site. Inhibition is reversed by incubation with excess pyridoxal phosphate. Inhibited by the fungal natural product myriocin, which acts as a competitive inhibitor for both L-serine and palmitoyl-CoA substrates. In terms of biological role, catalyzes the condensation of L-serine with palmitoyl-CoA (hexadecanoyl-CoA) to produce 3-oxosphinganine. Exhibits a broad substrate specificity concerning the chain length and the degree of unsaturation of acyl-CoA. This Sphingomonas paucimobilis (Pseudomonas paucimobilis) protein is Serine palmitoyltransferase.